Here is a 154-residue protein sequence, read N- to C-terminus: Flagellar assembly factor FliW (154 aa).

It belongs to the FliW family. In terms of assembly, interacts with translational regulator CsrA and flagellin(s).

The protein localises to the cytoplasm. Functionally, acts as an anti-CsrA protein, binds CsrA and prevents it from repressing translation of its target genes, one of which is flagellin. Binds to flagellin and participates in the assembly of the flagellum. In Carboxydothermus hydrogenoformans (strain ATCC BAA-161 / DSM 6008 / Z-2901), this protein is Flagellar assembly factor FliW.